The sequence spans 134 residues: Transcription antitermination protein NusB (134 aa).

Belongs to the NusB family.

Functionally, involved in transcription antitermination. Required for transcription of ribosomal RNA (rRNA) genes. Binds specifically to the boxA antiterminator sequence of the ribosomal RNA (rrn) operons. The sequence is that of Transcription antitermination protein NusB from Shewanella frigidimarina (strain NCIMB 400).